Here is a 525-residue protein sequence, read N- to C-terminus: Histidine-rich glycoprotein (525 aa).

The first 18 residues, 1–18 (MKALIAALLLITLQYSCA), serve as a signal peptide directing secretion. Cystatin domains follow at residues 19–136 (VSPT…SALA) and 137–254 (NTKD…NING). Cystine bridges form between Cys24-Cys504, Cys78-Cys89, Cys105-Cys126, Cys203-Cys417, and Cys218-Cys241. Positions 41 to 84 (RRRDGYLFQLLRIADAHLDRVENTTVYYLVLDVQESDCSVLSRK) are interaction with ATP5F1A. Asn63 carries N-linked (GlcNAc...) asparagine glycosylation. The N-linked (GlcNAc...) asparagine glycan is linked to Asn125. The tract at residues 252-407 (INGVPPHLGH…GHHPHGHHPH (156 aa)) is disordered. Residues 284–293 (RDHHHPHKPH) are compositionally biased toward basic residues. Residues 310 to 320 (PPLPQGPPPLL) show a composition bias toward pro residues. Residues 323-348 (SCSSCQHATFGTNGAQRHSHNNNSSD) are compositionally biased toward polar residues. Asn344 and Asn345 each carry an N-linked (GlcNAc...) asparagine glycan. Residues 348 to 382 (DLHPHKHHSHEQHPHGHHPHAHHPHEHDTHRQHPH) form a necessary for endothelial cell focal adhesions and anti-angiogenic activities region. Basic residues-rich tracts occupy residues 351-371 (PHKH…AHHP) and 379-407 (QHPH…HHPH).

Interacts (via the HRR domain) with TPM1; the interaction appears to contribute to the antiangiogenic properties of the HRR domain. Interacts with THBS2; the interaction blocks the antiangiogenic effect of THBS2 with CD36. Interacts with THBS1 (via the TSP type I repeats); the interaction blocks the antiangiogenic effect of THBS1 with CD3. Interacts with PLG (via its Kringle domains); the interaction tethers PLG to the cell surface and enhances its activation. Interacts with HPSE; the interaction is enhanced at acidic pH, partially inhibits binding of HPSE to cell surface receptors and modulates its enzymatic activity. Interacts (via the HRR domain) with TMP1; the interaction partially mediates the antiangiogenic properties of HRG. Interacts with kappa and lambda light chains of IgG molecules. Interacts with ATP5F1A; the interaction occurs on the surface of T-cells and alters their cell morphology in concert with CONA. Binds IgG molecules containing kappa and lambda light chains and inhibits the formation of insoluble immunoglobulin complexes. Interacts with F12; the interaction, which is enhanced in the presence of zinc ions and inhibited by heparin-binding to HRG, inhibits factor XII autoactivation and contact-initiated coagulation. It depends on Zn(2+) as a cofactor. In terms of processing, proteolytic cleavage produces several HRG fragments which are mostly disulfide-linked and, therefore, not released. Cleavage by plasmin is inhibited in the presence of heparin, zinc ions or in an acidic environment. Cleavage reduces binding of HRG to heparan sulfate, but enhances the ability of HRG to bind and tether plasminogen to the cell surface. On platelet activation, releases a 33 kDa antiangiogenic peptide which encompasses the HRR. Also cleaved in the C-terminal by plasmin. N-glycosylated. In terms of tissue distribution, expressed in macrophages and in malignant cells. Expressed by the liver and secreted in plasma (at protein level).

The protein resides in the secreted. Plasma glycoprotein that binds a number of ligands such as heme, heparin, heparan sulfate, thrombospondin, plasminogen, and divalent metal ions. Binds heparin and heparin/glycosaminoglycans in a zinc-dependent manner. Binds heparan sulfate on the surface of liver, lung, kidney and heart endothelial cells. Binds to N-sulfated polysaccharide chains on the surface of liver endothelial cells. Inhibits rosette formation. Acts as an adapter protein and is implicated in regulating many processes such as immune complex and pathogen clearance, cell chemotaxis, cell adhesion, angiogenesis, coagulation and fibrinolysis. Mediates clearance of necrotic cells through enhancing the phagocytosis of necrotic cells in a heparan sulfate-dependent pathway. This process can be regulated by the presence of certain HRG ligands such as heparin and zinc ions. Binds to IgG subclasses of immunoglobins containing kappa and lambda light chains with different affinities regulating their clearance and inhibiting the formation of insoluble immune complexes. Tethers plasminogen to the cell surface. Binds T-cells and alters the cell morphology. Modulates angiogenesis by blocking the CD6-mediated antiangiongenic effect of thrombospondins, THBS1 and THBS2. Acts as a regulator of the vascular endothelial growth factor (VEGF) signaling pathway; inhibits endothelial cell motility by reducing VEGF-induced complex formation between PXN/paxillin and ILK/integrin-linked protein kinase and by promoting inhibition of VEGF-induced tyrosine phosphorylation of focal adhesion kinases and alpha-actinins in endothelial cells. Also plays a role in the regulation of tumor angiogenesis and tumor immune surveillance. Normalizes tumor vessels and promotes antitumor immunity by polarizing tumor-associated macrophages, leading to decreased tumor growth and metastasis. The sequence is that of Histidine-rich glycoprotein (HRG) from Homo sapiens (Human).